The following is a 572-amino-acid chain: Proline--tRNA ligase (572 aa).

This sequence belongs to the class-II aminoacyl-tRNA synthetase family. ProS type 1 subfamily. As to quaternary structure, homodimer.

The protein resides in the cytoplasm. It carries out the reaction tRNA(Pro) + L-proline + ATP = L-prolyl-tRNA(Pro) + AMP + diphosphate. Functionally, catalyzes the attachment of proline to tRNA(Pro) in a two-step reaction: proline is first activated by ATP to form Pro-AMP and then transferred to the acceptor end of tRNA(Pro). As ProRS can inadvertently accommodate and process non-cognate amino acids such as alanine and cysteine, to avoid such errors it has two additional distinct editing activities against alanine. One activity is designated as 'pretransfer' editing and involves the tRNA(Pro)-independent hydrolysis of activated Ala-AMP. The other activity is designated 'posttransfer' editing and involves deacylation of mischarged Ala-tRNA(Pro). The misacylated Cys-tRNA(Pro) is not edited by ProRS. The protein is Proline--tRNA ligase of Salmonella schwarzengrund (strain CVM19633).